Here is a 712-residue protein sequence, read N- to C-terminus: Elongation factor G (712 aa).

A tr-type G domain is found at 8-290; that stretch reads TRYRNIGISA…AVIEFLPSPT (283 aa). GTP is bound by residues 17-24, 88-92, and 142-145; these read AHIDAGKT, DTPGH, and NKMD.

Belongs to the TRAFAC class translation factor GTPase superfamily. Classic translation factor GTPase family. EF-G/EF-2 subfamily.

Its subcellular location is the cytoplasm. Catalyzes the GTP-dependent ribosomal translocation step during translation elongation. During this step, the ribosome changes from the pre-translocational (PRE) to the post-translocational (POST) state as the newly formed A-site-bound peptidyl-tRNA and P-site-bound deacylated tRNA move to the P and E sites, respectively. Catalyzes the coordinated movement of the two tRNA molecules, the mRNA and conformational changes in the ribosome. This is Elongation factor G from Acinetobacter baumannii (strain AB0057).